The primary structure comprises 95 residues: MPKQEKMMLVLLILPLPYCNAAGVTTVQWGGHGDGLDRYLQRGVRDVHRPCQSVRPGRVWGKCCLTRLCSTMCCARADCTCVYHTWRGHGCSCVM.

Residues 1-21 form the signal peptide; it reads MPKQEKMMLVLLILPLPYCNA. Residues 22 to 45 constitute a propeptide that is removed on maturation; it reads AGVTTVQWGGHGDGLDRYLQRGVR. Cystine bridges form between C64/C73, C69/C81, C74/C91, and C79/C93.

This sequence belongs to the conotoxin D superfamily. Homodimer. Pseudo-homodimer (identical sequence, different post-translational modifications). As to expression, expressed by the venom duct.

Its subcellular location is the secreted. Functionally, alpha-D-conopeptides act as non-competitive inhibitors of nicotinic acetylcholine receptors (nAChR). Through its two C-terminal domains, this homodimeric protein would bind to two nAChR allosteric sites, located outside the nAChR C-loop of the principal binding face and at the adjacent binding interface in a clockwise direction. This toxin has strong inhibitory activity on rat alpha-9-alpha-10 (CHRNA9-CHRNA10) (IC(50)=1.2 nM) and a moderate inhibitory activity on human alpha-7 (CHRNA7) (IC(50)=210 nM), rat alpha-3-beta-2 (CHRNA3-CHRNB2) (IC(50)=498 nM), rat alpha-3-beta-4 (CHRNA3-CHRNB4) (IC(50)=614 nM) and rat alpha-1-beta-1-delta-epsilon (CHRNA1-CHRNB1-CHRNE-CHRND) (IC(50)=743 nM) subtypes. Shows a weaker inhibitory activity on human alpha-9-alpha-10 (IC(50)=28 nM) than on the rat channel. This is explained by a different residue in the probable binding site (His-31 in rat alpha-10 and Leu-31 in human). The chain is Alpha-conotoxin GeXXA from Conus generalis (General cone).